The chain runs to 277 residues: tRNA (guanine-N(7)-)-methyltransferase (277 aa).

The segment at 1–37 is disordered; it reads MAGTETGDAAGTEAPQPQKRYYRQRAHSNPMADHTLR. Ser28 carries the phosphoserine modification. Positions 85, 108, 110, 141, 142, and 161 each coordinate S-adenosyl-L-methionine. Residue Asp164 is part of the active site. An alphaC helix region spans residues 165–173; that stretch reads PHFKRTKHK. Positions 239 and 241 each coordinate S-adenosyl-L-methionine. An alpha6 helix region spans residues 239-247; sequence TEEGKKVLR.

This sequence belongs to the class I-like SAM-binding methyltransferase superfamily. TrmB family. As to quaternary structure, catalytic component of the METTL1-WDR4 complex, composed of METTL1 and WDR4. Post-translationally, phosphorylation at Ser-28 by PKB/AKT1 inactivates its methyltransferase activity via a steric interference mechanism in the active site that locally disrupts the catalytic center. Phosphorylation at Ser-28 does not affect the interaction with WDR4.

It localises to the nucleus. The catalysed reaction is guanosine(46) in tRNA + S-adenosyl-L-methionine = N(7)-methylguanosine(46) in tRNA + S-adenosyl-L-homocysteine. The enzyme catalyses a guanosine in mRNA + S-adenosyl-L-methionine = an N(7)-methylguanosine in mRNA + S-adenosyl-L-homocysteine. It catalyses the reaction a guanosine in miRNA + S-adenosyl-L-methionine = an N(7)-methylguanosine in miRNA + S-adenosyl-L-homocysteine. The protein operates within tRNA modification; N(7)-methylguanine-tRNA biosynthesis. Functionally, catalytic component of METTL1-WDR4 methyltransferase complex that mediates the formation of N(7)-methylguanine in a subset of RNA species, such as tRNAs, mRNAs and microRNAs (miRNAs). Catalyzes the formation of N(7)-methylguanine at position 46 (m7G46) in a large subset of tRNAs that contain the 5'-RAGGU-3' motif within the variable loop. M7G46 interacts with C13-G22 in the D-loop to stabilize tRNA tertiary structure and protect tRNAs from decay. Also acts as a methyltransferase for a subset of internal N(7)-methylguanine in mRNAs. Internal N(7)-methylguanine methylation of mRNAs in response to stress promotes their relocalization to stress granules, thereby suppressing their translation. Also methylates a specific subset of miRNAs, such as let-7. N(7)-methylguanine methylation of let-7 miRNA promotes let-7 miRNA processing by disrupting an inhibitory secondary structure within the primary miRNA transcript (pri-miRNA). Acts as a regulator of embryonic stem cell self-renewal and differentiation. In Bos taurus (Bovine), this protein is tRNA (guanine-N(7)-)-methyltransferase.